A 363-amino-acid polypeptide reads, in one-letter code: Pulmonary surfactant-associated protein B (363 aa).

The signal sequence occupies residues 1–16 (LLWLLLLPTLCGLGAA). Residues 17-180 (DWSAPSLACA…PHTQDLSEQQ (164 aa)) constitute a propeptide that is removed on maturation. Residues 18–58 (WSAPSLACARGPAFWCQSLEQALQCRALGHCLQEVWGNARA) form the Saposin A-type domain. Saposin B-type domains lie at 58–140 (ADDL…KPGL), 184–261 (PLPY…SHED), and 277–352 (QESK…RTTF). Cystine bridges form between C62–C136, C65–C130, C93–C105, C188–C257, C191–C251, C215–C226, C281–C348, C284–C342, and C307–C317. The propeptide occupies 260–363 (EDSAGPALAS…PLQCIHIPHF (104 aa)). N293 carries an N-linked (GlcNAc...) asparagine glycan.

As to quaternary structure, homodimer; disulfide-linked.

Its subcellular location is the secreted. It is found in the extracellular space. It localises to the surface film. Functionally, pulmonary surfactant-associated proteins promote alveolar stability by lowering the surface tension at the air-liquid interface in the peripheral air spaces. SP-B increases the collapse pressure of palmitic acid to nearly 70 millinewtons per meter. The polypeptide is Pulmonary surfactant-associated protein B (SFTPB) (Canis lupus familiaris (Dog)).